We begin with the raw amino-acid sequence, 978 residues long: Chaperone protein ClpB2, chloroplastic (978 aa).

The N-terminal 76 residues, 1-76 (MAAAPPLAAG…RMPPRTLSVR (76 aa)), are a transit peptide targeting the chloroplast. Residues 85 to 229 (TQQEFTEMAW…KTAIESIRGK (145 aa)) enclose the Clp R domain. Repeat regions lie at residues 89-154 (FTEM…IQRQ) and 166-229 (LGRD…IRGK). Residues 244–492 (LDKYGKDLTA…KLKMEITSKP (249 aa)) form an i region. ATP is bound by residues 289–296 (GEPGVGKT) and 692–699 (GPTGVGKT). An II region spans residues 618–809 (VTQDDIAEIV…IIIMTSNVGS (192 aa)).

The protein belongs to the ClpA/ClpB family.

The protein resides in the plastid. It localises to the chloroplast. Molecular chaperone that may play a role in chloroplast development. The protein is Chaperone protein ClpB2, chloroplastic (CLPB2) of Oryza sativa subsp. japonica (Rice).